We begin with the raw amino-acid sequence, 375 residues long: Secondary metabolism regulator laeA (375 aa).

Polar residues predominate over residues 15–26 (ASPNRNNYSYQG). 2 disordered regions span residues 15–37 (ASPN…RSRQ) and 50–75 (QEPP…TSHY).

Belongs to the methyltransferase superfamily. LaeA methyltransferase family. As to quaternary structure, component of the heterotrimeric velvet complex composed of laeA, veA and velB; VeA acting as a bridging protein between laeA and velB.

The protein localises to the nucleus. The catalysed reaction is L-methionyl-[protein] + S-adenosyl-L-methionine = S-methyl-L-methionyl-[protein] + S-adenosyl-L-homocysteine. Methyltransferase that performs automethylation. No other methyl-accepting substrate has been identified yet. Component of the velvet transcription factor complex that acts as a global regulator for secondary metabolite gene expression. Controls the expression of the citric acid, demethylkotanin, orlandin, asperrubrol, tensidol B, atromentin and JBIR8 gene clusters. Also represses the expression of genes related to the production of BMS-192548 and aspernigrin A. This chain is Secondary metabolism regulator laeA, found in Aspergillus niger (strain ATCC 1015 / CBS 113.46 / FGSC A1144 / LSHB Ac4 / NCTC 3858a / NRRL 328 / USDA 3528.7).